A 571-amino-acid chain; its full sequence is Sulfite reductase [NADPH] hemoprotein beta-component (571 aa).

[4Fe-4S] cluster is bound by residues Cys-435, Cys-441, Cys-480, and Cys-484. Cys-484 is a siroheme binding site.

The protein belongs to the nitrite and sulfite reductase 4Fe-4S domain family. Alpha(8)-beta(8). The alpha component is a flavoprotein, the beta component is a hemoprotein. The cofactor is siroheme. Requires [4Fe-4S] cluster as cofactor.

The enzyme catalyses hydrogen sulfide + 3 NADP(+) + 3 H2O = sulfite + 3 NADPH + 4 H(+). It participates in sulfur metabolism; hydrogen sulfide biosynthesis; hydrogen sulfide from sulfite (NADPH route): step 1/1. In terms of biological role, component of the sulfite reductase complex that catalyzes the 6-electron reduction of sulfite to sulfide. This is one of several activities required for the biosynthesis of L-cysteine from sulfate. The protein is Sulfite reductase [NADPH] hemoprotein beta-component of Musicola paradisiaca (strain Ech703) (Dickeya paradisiaca).